The following is a 153-amino-acid chain: Cell division protein SepF (153 aa).

Belongs to the SepF family. Homodimer. Interacts with FtsZ.

It localises to the cytoplasm. In terms of biological role, cell division protein that is part of the divisome complex and is recruited early to the Z-ring. Probably stimulates Z-ring formation, perhaps through the cross-linking of FtsZ protofilaments. Its function overlaps with FtsA. The chain is Cell division protein SepF from Clostridium novyi (strain NT).